A 445-amino-acid polypeptide reads, in one-letter code: UPF0210 protein LACR_1020 (445 aa).

This sequence belongs to the UPF0210 family. As to quaternary structure, homodimer.

The polypeptide is UPF0210 protein LACR_1020 (Lactococcus lactis subsp. cremoris (strain SK11)).